We begin with the raw amino-acid sequence, 885 residues long: Disease resistance protein RFL1 (885 aa).

The stretch at 27–61 (SYIQNLSENLASLQKAMGVLNAKRDDVQGRINREE) forms a coiled coil. One can recognise an NB-ARC domain in the interval 141 to 443 (EAAPIAEVEE…CEGFIKEKQG (303 aa)). 183-190 (GMGGVGKT) contacts ATP. LRR repeat units follow at residues 517–538 (AVKRMSLMNNNFEKILGSPECV), 539–561 (ELITLFLQNNYKLVDISMEFFRC), 564–586 (SLAVLDLSENHSLSELPEEISEL), 588–610 (SLQYLDLSGTYIERLPHGLHELR), 611–633 (KLVHLKLERTRRLESISGISYLS), 634–655 (SLRTLRLRDSKTTLDTGLMKEL), and 657–679 (LLEHLELITTDISSGLVGELFCY).

It belongs to the disease resistance NB-LRR family.

Functionally, disease resistance (R) protein. The sequence is that of Disease resistance protein RFL1 (RFL1) from Arabidopsis thaliana (Mouse-ear cress).